The chain runs to 553 residues: Effector protein HopAB2 (553 aa).

3 disordered regions span residues 1–123 (MAGI…APRR), 198–227 (AVHQ…GSSQ), and 239–275 (APNQ…AAMR). Residues 1-308 (MAGINRAGPS…LRTALERHVM (308 aa)) are host recognition; Pto interaction. Low complexity predominate over residues 24–39 (SGQAHGSGSGASSSNS). Residues 47–60 (SNTPPSNAPAPPPT) are compositionally biased toward pro residues. Low complexity predominate over residues 217-227 (SPAASSSGSSQ). The segment covering 242-255 (QGRSSNTAASQTPV) has biased composition (polar residues). An E3 ubiquitin-protein ligase region spans residues 309–553 (QRLPIPLDIG…IAKYAFRIVP (245 aa)). The Interaction with Pto-kinase motif lies at 325-328 (GINP). Residues 361 to 380 (APRPAVPVAPATASRRPDGT) form a disordered region. Residues 512-529 (KDLAFMDMKKLAQFLAGK) are required for E3 ubiquitin-protein ligase and anti-PCD activities and pathogenesis.

This sequence belongs to the HopAB family. In terms of assembly, interacts physically with plant cell Pto. Auto-ubiquitinated.

It is found in the secreted. In terms of biological role, effector protein involved in gene-for-gene resistance in tomato plants. It is recognized by the host Pto resistance protein and elicits Pto and Prf-dependent hypersensitive response (HR) and programmed cell death (PCD), resulting in host immunity. In susceptible plants, acts as a virulence factor by suppressing PCD and HR-based plant immunity. This function requires its E3 ubiquitin ligase activity probably by recruiting E2 enzymes and transferring ubiquitin molecules to cellular proteins involved in regulation of PCD and targeting them for degradation. Also, induces expression of host genes involved in ethylene biosynthesis and signaling, in particular ACO1 and ACO2, encoding the ethylene-forming enzyme ACC oxidase. This is Effector protein HopAB2 (hopAB2) from Pseudomonas syringae pv. tomato (strain ATCC BAA-871 / DC3000).